The following is a 312-amino-acid chain: Malate dehydrogenase (312 aa).

NAD(+) contacts are provided by residues 7–13 (GAAGGIG) and Asp-34. Positions 81 and 87 each coordinate substrate. Residues Asn-94 and 117 to 119 (ITN) each bind NAD(+). 2 residues coordinate substrate: Asn-119 and Arg-153. His-177 acts as the Proton acceptor in catalysis. Met-228 serves as a coordination point for NAD(+).

Belongs to the LDH/MDH superfamily. MDH type 1 family. Homodimer.

The catalysed reaction is (S)-malate + NAD(+) = oxaloacetate + NADH + H(+). In terms of biological role, catalyzes the reversible oxidation of malate to oxaloacetate. This is Malate dehydrogenase from Mannheimia succiniciproducens (strain KCTC 0769BP / MBEL55E).